The following is a 287-amino-acid chain: Chlorophyll a-b binding protein CP29.2, chloroplastic (287 aa).

The N-terminal 31 residues, 1 to 31 (MAATSTAAAASSIMGTRVVSDISSNSSRFTA), are a transit peptide targeting the chloroplast. Arginine 32 carries the N2-acetylarginine modification. Threonine 37 is subject to Phosphothreonine. Position 55 (tryptophan 55) interacts with chlorophyll b. Phenylalanine 75 contributes to the chlorophyll a binding site. Phosphothreonine occurs at positions 109 and 111. Chlorophyll a is bound by residues glutamate 137 and histidine 140. The chain crosses the membrane as a helical span at residues 143-163 (WAMLATLGAITVEWLTGVTWQ). Leucine 177 provides a ligand contact to chlorophyll a. The helical transmembrane segment at 181–201 (LPFSISTLIWIEVLVIGYIEF) threads the bilayer. Positions 200 and 203 each coordinate chlorophyll b. 5 residues coordinate chlorophyll a: glutamate 239, histidine 242, arginine 244, glutamine 256, and histidine 271. Residues 245 to 265 (LAMVGFLGFAVQAAATGKGPL) form a helical membrane-spanning segment.

It belongs to the light-harvesting chlorophyll a/b-binding (LHC) protein family. In terms of assembly, the LHC complex consists of chlorophyll a-b binding proteins. Binds at least 14 chlorophylls (8 Chl-a and 6 Chl-b) and carotenoids such as lutein and neoxanthin. is required as a cofactor. Photoregulated by reversible phosphorylation of its threonine residues.

It localises to the plastid. The protein resides in the chloroplast thylakoid membrane. In terms of biological role, the light-harvesting complex (LHC) functions as a light receptor, it captures and delivers excitation energy to photosystems with which it is closely associated. The polypeptide is Chlorophyll a-b binding protein CP29.2, chloroplastic (LHCB4.2) (Arabidopsis thaliana (Mouse-ear cress)).